Consider the following 458-residue polypeptide: Chromosomal replication initiator protein DnaA (458 aa).

The domain I, interacts with DnaA modulators stretch occupies residues 1–84 (MENIWLEAQT…FHVAEEKPEA (84 aa)). A compositionally biased stretch (basic and acidic residues) spans 80–119 (EKPEAAHEAKPEKEAKPAREKERDKDKEKEKDREKEKKEL). A disordered region spans residues 80-120 (EKPEAAHEAKPEKEAKPAREKERDKDKEKEKDREKEKKELV). Residues 84 to 121 (AAHEAKPEKEAKPAREKERDKDKEKEKDREKEKKELVP) are domain II. The segment at 122–338 (NLNPKYTFES…GMLIRLEAFA (217 aa)) is domain III, AAA+ region. ATP contacts are provided by G166, G168, K169, and T170. The segment at 339–458 (SLTGQEITLS…VEDIRKKLFT (120 aa)) is domain IV, binds dsDNA.

This sequence belongs to the DnaA family. Oligomerizes as a right-handed, spiral filament on DNA at oriC.

The protein localises to the cytoplasm. Plays an essential role in the initiation and regulation of chromosomal replication. ATP-DnaA binds to the origin of replication (oriC) to initiate formation of the DNA replication initiation complex once per cell cycle. Binds the DnaA box (a 9 base pair repeat at the origin) and separates the double-stranded (ds)DNA. Forms a right-handed helical filament on oriC DNA; dsDNA binds to the exterior of the filament while single-stranded (ss)DNA is stabiized in the filament's interior. The ATP-DnaA-oriC complex binds and stabilizes one strand of the AT-rich DNA unwinding element (DUE), permitting loading of DNA polymerase. After initiation quickly degrades to an ADP-DnaA complex that is not apt for DNA replication. Binds acidic phospholipids. In Citrifermentans bemidjiense (strain ATCC BAA-1014 / DSM 16622 / JCM 12645 / Bem) (Geobacter bemidjiensis), this protein is Chromosomal replication initiator protein DnaA.